The sequence spans 330 residues: Polyprenal reductase (330 aa).

Over 1–16 (MAGWAGFELSALNPLR) the chain is Cytoplasmic. The chain crosses the membrane as a helical span at residues 17 to 37 (TLWLALAAAFLFALLLQLAPA). The Lumenal segment spans residues 38 to 80 (RLLPSCALFQDLLRYGKTKQSGSRRPAVCRAFDVPKRYFSHFY). The helical transmembrane segment at 81-101 (VISVVWNGSLLWLLSQSLFLG) threads the bilayer. The Cytoplasmic segment spans residues 102–132 (APFPNWLSALLRTLGATQFQALEMESKASRM). A helical transmembrane segment spans residues 133 to 153 (PAAELALSAFLVLVFLWVHSL). Over 154–169 (RRLFECFYVSVFSNAA) the chain is Lumenal. A helical membrane pass occupies residues 170 to 190 (IHVVQYCFGLVYYVLVGLTVL). Topologically, residues 191–206 (SQVPMDDKNVYVLGKN) are cytoplasmic. A helical membrane pass occupies residues 207-227 (LLIQARWFHILGMVMFFWSSA). Residues 228–277 (HQYKCHVILSNLRRNKKGVVIHCQHRIPFGDWFEYVSSANYLAELMIYIS) lie on the Lumenal side of the membrane. Residues 278–298 (MAVTFGLHNLTWWLVVTYVFS) form a helical membrane-spanning segment. Topologically, residues 299 to 330 (SQALSAFFNHKFYRSTFVSYPKHRKAFLPFLF) are cytoplasmic.

Belongs to the steroid 5-alpha reductase family. Polyprenal reductase subfamily.

It localises to the endoplasmic reticulum membrane. It catalyses the reaction a di-trans,poly-cis-dolichal + NADP(+) = a di-trans,poly-cis-polyprenal + NADPH + H(+). The catalysed reaction is a 3-oxo-5alpha-steroid + NADP(+) = a 3-oxo-Delta(4)-steroid + NADPH + H(+). It carries out the reaction androst-4-ene-3,17-dione + NADPH + H(+) = 5alpha-androstan-3,17-dione + NADP(+). The enzyme catalyses 17beta-hydroxy-5alpha-androstan-3-one + NADP(+) = testosterone + NADPH + H(+). The protein operates within protein modification; protein glycosylation. Its function is as follows. Plays a key role in early steps of protein N-linked glycosylation by being involved in the conversion of polyprenol into dolichol. Acts as a polyprenal reductase that mediates the reduction of polyprenal into dolichal in a NADP-dependent mechanism. Dolichols are required for the synthesis of dolichol-linked monosaccharides and the oligosaccharide precursor used for N-glycosylation. Also able to convert testosterone (T) into 5-alpha-dihydrotestosterone (DHT). This is Polyprenal reductase from Mus musculus (Mouse).